Here is a 94-residue protein sequence, read N- to C-terminus: Anaphase-promoting complex subunit 11 (94 aa).

An RING-type zinc finger spans residues 35–78 (CPQCTSPGDNCPIVWGKCKHIFHAHCIQNWLATSGSQGQCPMDR).

The APC/C is composed of at least 13 subunits: apc1, apc2, nuc2, apc4, apc5, cut9, apc8, apc10, apc11, hcn1, apc13, apc14 and apc15.

Its function is as follows. Component of the anaphase-promoting complex/cyclosome (APC/C), a cell cycle-regulated E3 ubiquitin-protein ligase complex that controls progression through mitosis and the G1 phase of the cell cycle. The APC/C is thought to confer substrate specificity and, in the presence of ubiquitin-conjugating E2 enzymes, it catalyzes the formation of protein-ubiquitin conjugates that are subsequently degraded by the 26S proteasome. In Schizosaccharomyces pombe (strain 972 / ATCC 24843) (Fission yeast), this protein is Anaphase-promoting complex subunit 11 (apc11).